The sequence spans 110 residues: Dermcidin (110 aa).

The first 19 residues, 1-19, serve as a signal peptide directing secretion; sequence MRFMTLLFLTALAGALVCA. The disordered stretch occupies residues 24–70; sequence AASAPGSGNPCHEASAAQKENAGEDPGLARQAPKPRKQRSSLLEKGL. 2 O-linked (Xyl...) (chondroitin sulfate) serine glycosylation sites follow: Ser30 and Ser38. The propeptide occupies 50 to 62; the sequence is GLARQAPKPRKQR. Residues 64-108 form a helical membrane-spanning segment; it reads SLLEKGLDGAKKAVGGLGKLGKDAVEDLESVGKGAVHDVKDVLDS. Residue Glu67 participates in Zn(2+) binding. Residue Lys68 is modified to N6-acetyllysine. The Zn(2+) site is built by Asp71, Asp86, Asp90, His100, and Asp104. A propeptide is located at residue Leu110.

As to quaternary structure, homohexamer. Mn(2+) serves as cofactor. Requires Zn(2+) as cofactor. As to expression, detected in urine (at protein level). Constitutively expressed in eccrine sweat gland cells (at protein level). Secreted into the sweat at a concentration of 1-10 micrograms/ml.

The protein localises to the secreted. Its subcellular location is the membrane. Its function is as follows. Found in sweat, has an antimicrobial activity during early bacterial colonization. The secreted peptide assembles into homohexameric complexes that can associate with and also insert into pathogen membranes. Once inserted in bacteria membranes forms anion channels probably altering the transmembrane potential essential for bacterial survival. Highly effective against E.coli, E.faecalis, S.aureus and C.albicans. Optimal pH and salt concentration resemble the conditions in sweat. Also exhibits proteolytic activity, cleaving on the C-terminal side of Arg and, to a lesser extent, Lys residues. In terms of biological role, promotes survival of neurons and displays phosphatase activity. It may bind IgG. The chain is Dermcidin from Homo sapiens (Human).